Consider the following 316-residue polypeptide: Actinorhodin polyketide synthase bifunctional cyclase/dehydratase (316 aa).

Its pathway is antibiotic biosynthesis; actinorhodin biosynthesis. Functionally, is needed for correct cyclization of the oligoketide leading to isochromanequinone formation. The chain is Actinorhodin polyketide synthase bifunctional cyclase/dehydratase from Streptomyces coelicolor (strain ATCC BAA-471 / A3(2) / M145).